The following is a 112-amino-acid chain: Secretoglobin family 2B member 20 (112 aa).

The N-terminal stretch at 1–23 is a signal peptide; the sequence is MKGTLLLLGLLVTGELSFQTTEA. Residue asparagine 50 is glycosylated (N-linked (GlcNAc...) asparagine).

The protein belongs to the secretoglobin family. As to expression, expressed in lacrimal gland, at higher level in males than females. Expressed in the submandibular gland.

The protein resides in the secreted. The polypeptide is Secretoglobin family 2B member 20 (Scgb2b20) (Mus musculus (Mouse)).